Reading from the N-terminus, the 80-residue chain is Large ribosomal subunit protein eL13 (80 aa).

This sequence belongs to the eukaryotic ribosomal protein eL13 family.

The sequence is that of Large ribosomal subunit protein eL13 from Aeropyrum pernix (strain ATCC 700893 / DSM 11879 / JCM 9820 / NBRC 100138 / K1).